Consider the following 176-residue polypeptide: Acireductone dioxygenase (176 aa).

4 residues coordinate Fe(2+): His-81, His-83, Glu-87, and His-126. The Ni(2+) site is built by His-81, His-83, Glu-87, and His-126.

It belongs to the acireductone dioxygenase (ARD) family. Requires Fe(2+) as cofactor. The cofactor is Ni(2+).

It localises to the cytoplasm. The protein localises to the nucleus. It catalyses the reaction 1,2-dihydroxy-5-(methylsulfanyl)pent-1-en-3-one + O2 = 4-methylsulfanyl-2-oxobutanoate + formate + 2 H(+). The enzyme catalyses 1,2-dihydroxy-5-(methylsulfanyl)pent-1-en-3-one + O2 = 3-(methylsulfanyl)propanoate + CO + formate + 2 H(+). It participates in amino-acid biosynthesis; L-methionine biosynthesis via salvage pathway; L-methionine from S-methyl-5-thio-alpha-D-ribose 1-phosphate: step 5/6. Catalyzes 2 different reactions between oxygen and the acireductone 1,2-dihydroxy-3-keto-5-methylthiopentene (DHK-MTPene) depending upon the metal bound in the active site. Fe-containing acireductone dioxygenase (Fe-ARD) produces formate and 2-keto-4-methylthiobutyrate (KMTB), the alpha-ketoacid precursor of methionine in the methionine recycle pathway. Ni-containing acireductone dioxygenase (Ni-ARD) produces methylthiopropionate, carbon monoxide and formate, and does not lie on the methionine recycle pathway. The protein is Acireductone dioxygenase (adi1) of Sclerotinia sclerotiorum (strain ATCC 18683 / 1980 / Ss-1) (White mold).